Here is a 270-residue protein sequence, read N- to C-terminus: UPF0354 protein Bcer98_3354 (270 aa).

Belongs to the UPF0354 family.

This chain is UPF0354 protein Bcer98_3354, found in Bacillus cytotoxicus (strain DSM 22905 / CIP 110041 / 391-98 / NVH 391-98).